We begin with the raw amino-acid sequence, 517 residues long: Mitochondrial division protein fszA (517 aa).

Residues 60–64 (GGGCN), 147–149 (GTG), E178, R182, and D225 contribute to the GTP site. The disordered stretch occupies residues 496-517 (FTNGNNNKPYNNNKNTPGSNYE). The span at 497 to 517 (TNGNNNKPYNNNKNTPGSNYE) shows a compositional bias: low complexity.

This sequence belongs to the FtsZ family.

The protein localises to the mitochondrion matrix. In terms of biological role, probably involved in mitochondrion division process. When overexpressed, induces mitochondrial tubule formation. Binds to and hydrolyzes GTP. The chain is Mitochondrial division protein fszA (fszA) from Dictyostelium discoideum (Social amoeba).